A 997-amino-acid chain; its full sequence is Malignant fibrous histiocytoma-amplified sequence 1 homolog (997 aa).

14 LRR repeats span residues 32-53 (SLRQ…ADLG), 54-76 (DVEV…QSLS), 79-100 (NLHV…VYHL), 102-123 (RLTE…VGLL), 125-146 (KLKK…LGML), 148-170 (DLEE…QGLP), 171-192 (SLRT…LFHV), 194-216 (ALEE…IRSM), 218-239 (SLKI…ICEL), 241-262 (NLES…FGAL), 264-286 (KLKM…LQLV), 287-308 (DLEE…ISCM), 310-331 (KLVT…IVEL), and 333-354 (FLEE…FGKL). The Roc domain maps to 393 to 626 (QPAVKPRLKL…EKLLSVAEHR (234 aa)). Positions 637 to 861 (PKSWQMLEEL…RFSVQINSHI (225 aa)) constitute a COR domain.

Its subcellular location is the cytoplasm. Probable GTP-binding protein. Functions in innate immunity and more specifically the inflammatory response as a regulator of the Toll-like receptor TLR2 and TLR4 signaling pathways. This is Malignant fibrous histiocytoma-amplified sequence 1 homolog (mfhas1) from Xenopus tropicalis (Western clawed frog).